A 213-amino-acid polypeptide reads, in one-letter code: Charged multivesicular body protein 2b (213 aa).

N-acetylalanine is present on A2. Residues 25 to 55 (QRAIIRDRAALEKQEKQLELEIKKMAKIGNK) are a coiled coil. The tract at residues 178–202 (MAKAPSAARSLPSASTSKSTISDEE) is disordered. Residues 179–194 (AKAPSAARSLPSASTS) are compositionally biased toward low complexity. The residue at position 199 (S199) is a Phosphoserine. Positions 201 to 211 (EEIERQLKALG) match the MIT-interacting motif motif.

Belongs to the SNF7 family. Probable core component of the endosomal sorting required for transport complex III (ESCRT-III). ESCRT-III components are thought to multimerize to form a flat lattice on the perimeter membrane of the endosome. Several assembly forms of ESCRT-III may exist that interact and act sequentially. Interacts with CHMP2A. Interacts with VPS4A. Interacts with VPS4B; the interaction is direct.

It localises to the cytoplasm. Its subcellular location is the cytosol. The protein resides in the late endosome membrane. Functionally, probable core component of the endosomal sorting required for transport complex III (ESCRT-III) which is involved in multivesicular bodies (MVBs) formation and sorting of endosomal cargo proteins into MVBs. MVBs contain intraluminal vesicles (ILVs) that are generated by invagination and scission from the limiting membrane of the endosome and mostly are delivered to lysosomes enabling degradation of membrane proteins, such as stimulated growth factor receptors, lysosomal enzymes and lipids. The MVB pathway appears to require the sequential function of ESCRT-O, -I,-II and -III complexes. ESCRT-III proteins mostly dissociate from the invaginating membrane before the ILV is released. The ESCRT machinery also functions in topologically equivalent membrane fission events, such as the terminal stages of cytokinesis and the budding of enveloped viruses (lentiviruses). ESCRT-III proteins are believed to mediate the necessary vesicle extrusion and/or membrane fission activities, possibly in conjunction with the AAA ATPase VPS4. The polypeptide is Charged multivesicular body protein 2b (CHMP2B) (Bos taurus (Bovine)).